The chain runs to 310 residues: MKITVIGAGNVGATAALRIAEKQLAKEVVLIDIVEGIPQGKALDMYESGAVALFDTTVLGSNDYKDSADSDIVLITAGLARKPGMSREDLLKINATIIRDVTTEVMKYSANPIIIMVSNPLDVMTFVAWKASGLPKERVIGMAGVLDTARYKNFIAEALDVSMQDISAMVLGGHGDSMVPIVNYTNVAGIPLTELLPQDKIDALVERTRNGGIEIVNYLKTGSAFYAPAASAVEMIEGITKDRKRIIPCTTLLEGQYGIESVFCGVPVKLGKNGVEQILEINLTASELEALRKSAALVEENCKNLATLLG.

Residues Gly7–Gly12 and Asp32 contribute to the NAD(+) site. Positions 81 and 87 each coordinate substrate. NAD(+)-binding positions include Asn94 and Val117–Asn119. Asn119 and Arg150 together coordinate substrate. His174 (proton acceptor) is an active-site residue.

The protein belongs to the LDH/MDH superfamily. MDH type 3 family.

The catalysed reaction is (S)-malate + NAD(+) = oxaloacetate + NADH + H(+). Its function is as follows. Catalyzes the reversible oxidation of malate to oxaloacetate. The sequence is that of Malate dehydrogenase from Pelodictyon phaeoclathratiforme (strain DSM 5477 / BU-1).